We begin with the raw amino-acid sequence, 587 residues long: Protein NDNF (587 aa).

The first 24 residues, 1 to 24, serve as a signal peptide directing secretion; sequence MQRSTMLPGVELLLLFLLSTSLHA. N109, N129, N190, N321, N334, N459, N498, and N558 each carry an N-linked (GlcNAc...) asparagine glycan.

In terms of assembly, binds heparin. Interacts with dally; the interaction promotes dally degradation. Interacts with dpp and gbb.

Its subcellular location is the secreted. It is found in the extracellular space. It localises to the extracellular matrix. Its function is as follows. Secretory protein that acts as a feedback regulator of dpp/BMP, wg and hh signaling pathways. In the developing wing, is a dosage-dependent modulator of dpp/BMP signaling involved in wing growth and crossvein patterning; low levels promote and high levels inhibit dpp/BMP signaling. In the early pupal wing, inhibits dpp/BMP signaling activity to prevent the formation of ectopic crossveins in the posterior compartment. Binds to dpp and gbb to modulate their release and activity decreasing dpp/BMP signaling in the responding cells. During wing development regulates dpp/BMP coreceptor dally availability on the cell surface. Might have a role in testis development. This is Protein NDNF from Drosophila melanogaster (Fruit fly).